A 727-amino-acid chain; its full sequence is 1,4-alpha-glucan branching enzyme GlgB (727 aa).

Asp411 (nucleophile) is an active-site residue. The Proton donor role is filled by Glu464.

The protein belongs to the glycosyl hydrolase 13 family. GlgB subfamily. As to quaternary structure, monomer.

It carries out the reaction Transfers a segment of a (1-&gt;4)-alpha-D-glucan chain to a primary hydroxy group in a similar glucan chain.. The protein operates within glycan biosynthesis; glycogen biosynthesis. In terms of biological role, catalyzes the formation of the alpha-1,6-glucosidic linkages in glycogen by scission of a 1,4-alpha-linked oligosaccharide from growing alpha-1,4-glucan chains and the subsequent attachment of the oligosaccharide to the alpha-1,6 position. The chain is 1,4-alpha-glucan branching enzyme GlgB from Protochlamydia amoebophila (strain UWE25).